The following is a 492-amino-acid chain: Bifunctional purine biosynthesis protein PurH (492 aa).

One can recognise an MGS-like domain in the interval Met-1–Val-144.

This sequence belongs to the PurH family.

It catalyses the reaction (6R)-10-formyltetrahydrofolate + 5-amino-1-(5-phospho-beta-D-ribosyl)imidazole-4-carboxamide = 5-formamido-1-(5-phospho-D-ribosyl)imidazole-4-carboxamide + (6S)-5,6,7,8-tetrahydrofolate. The enzyme catalyses IMP + H2O = 5-formamido-1-(5-phospho-D-ribosyl)imidazole-4-carboxamide. The protein operates within purine metabolism; IMP biosynthesis via de novo pathway; 5-formamido-1-(5-phospho-D-ribosyl)imidazole-4-carboxamide from 5-amino-1-(5-phospho-D-ribosyl)imidazole-4-carboxamide (10-formyl THF route): step 1/1. Its pathway is purine metabolism; IMP biosynthesis via de novo pathway; IMP from 5-formamido-1-(5-phospho-D-ribosyl)imidazole-4-carboxamide: step 1/1. This Macrococcus caseolyticus (strain JCSC5402) (Macrococcoides caseolyticum) protein is Bifunctional purine biosynthesis protein PurH.